Consider the following 338-residue polypeptide: Phosphonates-binding periplasmic protein (338 aa).

The first 26 residues, 1 to 26 (MNAKIIASLAFTSMFSLSTLLSPAHA), serve as a signal peptide directing secretion.

Belongs to the phosphate/phosphite/phosphonate binding protein family. In terms of assembly, the complex is composed of two ATP-binding proteins (PhnC), two transmembrane proteins (PhnE) and a solute-binding protein (PhnD).

It is found in the periplasm. Functionally, phosphonate binding protein that is part of the phosphonate uptake system. Exhibits high affinity for 2-aminoethylphosphonate, and somewhat less affinity to ethylphosphonate, methylphosphonate, phosphonoacetate and phenylphosphonate. The protein is Phosphonates-binding periplasmic protein (phnD) of Escherichia coli (strain K12).